The primary structure comprises 89 residues: Defensin-like protein 250 (89 aa).

The first 23 residues, 1–23 (MKLAAIFLVSCVLLSLLPSLTIA), serve as a signal peptide directing secretion. 4 disulfides stabilise this stretch: C29/C86, C40/C69, C48/C79, and C67/C81.

This sequence belongs to the DEFL family.

Its subcellular location is the secreted. This Arabidopsis thaliana (Mouse-ear cress) protein is Defensin-like protein 250 (SCRL8).